We begin with the raw amino-acid sequence, 295 residues long: Histamine N-methyltransferase (295 aa).

Alanine 2 carries the post-translational modification Blocked amino end (Ala). Glutamate 28 contacts substrate. 5 residues coordinate S-adenosyl-L-methionine: glycine 60, glutamate 89, glutamine 94, serine 120, and isoleucine 143. Asparagine 284 provides a ligand contact to substrate.

The protein belongs to the class I-like SAM-binding methyltransferase superfamily. HNMT family. As to quaternary structure, monomer.

It localises to the cytoplasm. It carries out the reaction histamine + S-adenosyl-L-methionine = N(tau)-methylhistamine + S-adenosyl-L-homocysteine + H(+). In terms of biological role, inactivates histamine by N-methylation. Plays an important role in degrading histamine and in regulating the airway response to histamine. This chain is Histamine N-methyltransferase (Hnmt), found in Rattus norvegicus (Rat).